A 314-amino-acid chain; its full sequence is Homoserine O-acetyltransferase (314 aa).

The active-site Acyl-thioester intermediate is the Cys142. The substrate site is built by Lys163 and Ser192. The active-site Proton acceptor is His235. The active site involves Glu237. A substrate-binding site is contributed by Arg249.

This sequence belongs to the MetA family.

It localises to the cytoplasm. It catalyses the reaction L-homoserine + acetyl-CoA = O-acetyl-L-homoserine + CoA. It participates in amino-acid biosynthesis; L-methionine biosynthesis via de novo pathway; O-acetyl-L-homoserine from L-homoserine: step 1/1. Its function is as follows. Transfers an acetyl group from acetyl-CoA to L-homoserine, forming acetyl-L-homoserine. This chain is Homoserine O-acetyltransferase, found in Azobacteroides pseudotrichonymphae genomovar. CFP2.